Reading from the N-terminus, the 449-residue chain is 8-oxoguanine deaminase (449 aa).

Positions 64 and 66 each coordinate Zn(2+). A substrate-binding site is contributed by glutamine 69. Histidine 232 provides a ligand contact to Zn(2+). Substrate is bound by residues glutamate 235 and histidine 269. 2 residues coordinate Zn(2+): histidine 269 and aspartate 320.

The protein belongs to the metallo-dependent hydrolases superfamily. ATZ/TRZ family. Homodimer. It depends on Zn(2+) as a cofactor.

It catalyses the reaction 8-oxoguanine + H2O + H(+) = urate + NH4(+). The protein operates within purine metabolism. Functionally, specifically deaminates 8-Oxoguanine (8-oxoG) to uric acid. 8-oxoG is formed via the oxidation of guanine within DNA by reactive oxygen species and leads, if uncorrected, to the incorporation of 8-oxoG:A mismatches and eventually to G:C to T:A transversions. This is 8-oxoguanine deaminase from Pseudomonas aeruginosa (strain ATCC 15692 / DSM 22644 / CIP 104116 / JCM 14847 / LMG 12228 / 1C / PRS 101 / PAO1).